Reading from the N-terminus, the 217-residue chain is Coiled-coil domain-containing protein 124-A (217 aa).

The interval 1–128 is disordered; that stretch reads MPKKFQGENT…HLEMPLEENV (128 aa). Basic and acidic residues-rich tracts occupy residues 18–45, 52–74, and 95–128; these read RKAEAKAVSDGKRQKEIEDAYWQDDDKH, RKEDKEKKRLEQLERKKESQRLL, and TRAEIEETLCKEEEHKATTEKPKTHLEMPLEENV. A coiled-coil region spans residues 46–82; sequence VARKGQRKEDKEKKRLEQLERKKESQRLLDEEDSKMK.

Belongs to the CCDC124 family. Associates with translationally inactive ribosomes in the nonrotated state.

The protein resides in the cytoplasm. It is found in the cytoskeleton. Its subcellular location is the microtubule organizing center. The protein localises to the centrosome. It localises to the midbody. Functionally, ribosome-binding protein involved in ribosome hibernation: associates with translationally inactive ribosomes and stabilizes the nonrotated conformation of the 80S ribosome, thereby promoting ribosome preservation and storage. The chain is Coiled-coil domain-containing protein 124-A (ccdc124-a) from Xenopus laevis (African clawed frog).